Consider the following 906-residue polypeptide: Probable RNA-directed DNA polymerase from transposon BS (906 aa).

A Reverse transcriptase domain is found at 482–758 (AILRVQFFPK…SQAKYLGITL (277 aa)).

Mg(2+) serves as cofactor. Mn(2+) is required as a cofactor.

The catalysed reaction is DNA(n) + a 2'-deoxyribonucleoside 5'-triphosphate = DNA(n+1) + diphosphate. The polypeptide is Probable RNA-directed DNA polymerase from transposon BS (Drosophila melanogaster (Fruit fly)).